Reading from the N-terminus, the 1151-residue chain is Error-prone DNA polymerase (1151 aa).

Positions 1108–1151 (HPVPSGDALIEPLNDDRRDHADAPAQKIRHPRNVRILPPSRDFH) are disordered.

It belongs to the DNA polymerase type-C family. DnaE2 subfamily.

The protein localises to the cytoplasm. It catalyses the reaction DNA(n) + a 2'-deoxyribonucleoside 5'-triphosphate = DNA(n+1) + diphosphate. Functionally, DNA polymerase involved in damage-induced mutagenesis and translesion synthesis (TLS). It is not the major replicative DNA polymerase. The sequence is that of Error-prone DNA polymerase from Bradyrhizobium diazoefficiens (strain JCM 10833 / BCRC 13528 / IAM 13628 / NBRC 14792 / USDA 110).